A 335-amino-acid polypeptide reads, in one-letter code: Ferredoxin--NADP reductase (335 aa).

Positions 35, 43, 48, 88, 122, 287, and 328 each coordinate FAD.

The protein belongs to the ferredoxin--NADP reductase type 2 family. Homodimer. FAD is required as a cofactor.

The enzyme catalyses 2 reduced [2Fe-2S]-[ferredoxin] + NADP(+) + H(+) = 2 oxidized [2Fe-2S]-[ferredoxin] + NADPH. This is Ferredoxin--NADP reductase from Thermus thermophilus (strain ATCC BAA-163 / DSM 7039 / HB27).